The primary structure comprises 129 residues: Histone H2B.2 (129 aa).

Residues 1 to 19 (MAPKAEKKPASKAPAEKKP) are compositionally biased toward basic and acidic residues. The interval 1–37 (MAPKAEKKPASKAPAEKKPAAKKTASSDSKKRTKTRK) is disordered. Lys7 and Lys8 each carry N6-acetyllysine; alternate. Glycyl lysine isopeptide (Lys-Gly) (interchain with G-Cter in SUMO); alternate cross-links involve residues Lys7 and Lys8. Residue Ser11 is modified to Phosphoserine. The residue at position 12 (Lys12) is an N6-acetyllysine. Lys17 carries the post-translational modification N6-acetyllysine; alternate. Lys17 is covalently cross-linked (Glycyl lysine isopeptide (Lys-Gly) (interchain with G-Cter in SUMO); alternate). Residue Lys18 forms a Glycyl lysine isopeptide (Lys-Gly) (interchain with G-Cter in SUMO) linkage. A Glycyl lysine isopeptide (Lys-Gly) (interchain with G-Cter in ubiquitin) cross-link involves residue Lys123.

Belongs to the histone H2B family. In terms of assembly, the nucleosome is a histone octamer containing two molecules each of H2A, H2B, H3 and H4 assembled in one H3-H4 heterotetramer and two H2A-H2B heterodimers. The octamer wraps approximately 147 bp of DNA. Monoubiquitinated by the UBC2-BRE1 complex to form H2BK123ub1. H2BK123ub1 gives a specific tag for epigenetic transcriptional activation and is also prerequisite for H3K4me and H3K79me formation. H2BK123ub1 also modulates the formation of double-strand breaks during meiosis and is a prerequisite for DNA-damage checkpoint activation. Post-translationally, phosphorylated by STE20 to form H2BS10ph during progression through meiotic prophase. May be correlated with chromosome condensation. In terms of processing, acetylated by GCN5 to form H2BK11ac and H2BK16ac. H2BK16ac can also be formed by ESA1. Acetylation of N-terminal lysines and particularly formation of H2BK11acK16ac has a positive effect on transcription. Sumoylation to form H2BK6su or H2BK7su, and probably also H2BK16su or H2BK17su, occurs preferentially near the telomeres and represses gene transcription.

The protein localises to the nucleus. It is found in the chromosome. Functionally, core component of nucleosome. Nucleosomes wrap and compact DNA into chromatin, limiting DNA accessibility to the cellular machineries which require DNA as a template. Histones thereby play a central role in transcription regulation, DNA repair, DNA replication and chromosomal stability. DNA accessibility is regulated via a complex set of post-translational modifications of histones, also called histone code, and nucleosome remodeling. This chain is Histone H2B.2 (HTB2), found in Meyerozyma guilliermondii (strain ATCC 6260 / CBS 566 / DSM 6381 / JCM 1539 / NBRC 10279 / NRRL Y-324) (Yeast).